Here is a 448-residue protein sequence, read N- to C-terminus: Probable glycine dehydrogenase (decarboxylating) subunit 1 (448 aa).

This sequence belongs to the GcvP family. N-terminal subunit subfamily. As to quaternary structure, the glycine cleavage system is composed of four proteins: P, T, L and H. In this organism, the P 'protein' is a heterodimer of two subunits.

The enzyme catalyses N(6)-[(R)-lipoyl]-L-lysyl-[glycine-cleavage complex H protein] + glycine + H(+) = N(6)-[(R)-S(8)-aminomethyldihydrolipoyl]-L-lysyl-[glycine-cleavage complex H protein] + CO2. In terms of biological role, the glycine cleavage system catalyzes the degradation of glycine. The P protein binds the alpha-amino group of glycine through its pyridoxal phosphate cofactor; CO(2) is released and the remaining methylamine moiety is then transferred to the lipoamide cofactor of the H protein. In Geobacillus sp. (strain WCH70), this protein is Probable glycine dehydrogenase (decarboxylating) subunit 1.